The chain runs to 364 residues: tRNA 2-selenouridine synthase (364 aa).

The 124-residue stretch at 14–137 folds into the Rhodanese domain; that stretch reads LIADTPIIDV…LRQTAIQATI (124 aa). Cys-97 functions as the S-selanylcysteine intermediate in the catalytic mechanism.

It belongs to the SelU family. As to quaternary structure, monomer.

It catalyses the reaction 5-methylaminomethyl-2-thiouridine(34) in tRNA + selenophosphate + (2E)-geranyl diphosphate + H2O + H(+) = 5-methylaminomethyl-2-selenouridine(34) in tRNA + (2E)-thiogeraniol + phosphate + diphosphate. The catalysed reaction is 5-methylaminomethyl-2-thiouridine(34) in tRNA + (2E)-geranyl diphosphate = 5-methylaminomethyl-S-(2E)-geranyl-thiouridine(34) in tRNA + diphosphate. It carries out the reaction 5-methylaminomethyl-S-(2E)-geranyl-thiouridine(34) in tRNA + selenophosphate + H(+) = 5-methylaminomethyl-2-(Se-phospho)selenouridine(34) in tRNA + (2E)-thiogeraniol. The enzyme catalyses 5-methylaminomethyl-2-(Se-phospho)selenouridine(34) in tRNA + H2O = 5-methylaminomethyl-2-selenouridine(34) in tRNA + phosphate. Involved in the post-transcriptional modification of the uridine at the wobble position (U34) of tRNA(Lys), tRNA(Glu) and tRNA(Gln). Catalyzes the conversion of 2-thiouridine (S2U-RNA) to 2-selenouridine (Se2U-RNA). Acts in a two-step process involving geranylation of 2-thiouridine (S2U) to S-geranyl-2-thiouridine (geS2U) and subsequent selenation of the latter derivative to 2-selenouridine (Se2U) in the tRNA chain. The protein is tRNA 2-selenouridine synthase of Escherichia fergusonii (strain ATCC 35469 / DSM 13698 / CCUG 18766 / IAM 14443 / JCM 21226 / LMG 7866 / NBRC 102419 / NCTC 12128 / CDC 0568-73).